Consider the following 162-residue polypeptide: Photosystem II extrinsic protein V (162 aa).

Positions M1 to A26 are cleaved as a signal peptide. The heme c site is built by C62, C65, H66, and H117.

This sequence belongs to the cytochrome c family. PsbV subfamily. In terms of assembly, PSII is composed of 1 copy each of membrane proteins PsbA, PsbB, PsbC, PsbD, PsbE, PsbF, PsbH, PsbI, PsbJ, PsbK, PsbL, PsbM, PsbT, PsbX, PsbY, PsbZ, Psb30/Ycf12, peripheral proteins PsbO, CyanoQ (PsbQ), PsbU, PsbV and a large number of cofactors. It forms dimeric complexes. Heme c is required as a cofactor.

The protein localises to the cellular thylakoid membrane. Functionally, one of the extrinsic, lumenal subunits of photosystem II (PSII). PSII is a light-driven water plastoquinone oxidoreductase, using light energy to abstract electrons from H(2)O, generating a proton gradient subsequently used for ATP formation. The extrinsic proteins stabilize the structure of photosystem II oxygen-evolving complex (OEC), the ion environment of oxygen evolution and protect the OEC against heat-induced inactivation. Low-potential cytochrome c that plays a role in the OEC of PSII. The chain is Photosystem II extrinsic protein V from Acaryochloris marina (strain MBIC 11017).